The following is a 137-amino-acid chain: Large ribosomal subunit protein uL14 (137 aa).

The protein belongs to the universal ribosomal protein uL14 family. In terms of assembly, component of the large ribosomal subunit. Mature ribosomes consist of a small (40S) and a large (60S) subunit. The 40S subunit contains about 32 different proteins and 1 molecule of RNA (18S). The 60S subunit contains 45 different proteins and 3 molecules of RNA (25S, 5.8S and 5S).

Its subcellular location is the cytoplasm. Component of the ribosome, a large ribonucleoprotein complex responsible for the synthesis of proteins in the cell. The small ribosomal subunit (SSU) binds messenger RNAs (mRNAs) and translates the encoded message by selecting cognate aminoacyl-transfer RNA (tRNA) molecules. The large subunit (LSU) contains the ribosomal catalytic site termed the peptidyl transferase center (PTC), which catalyzes the formation of peptide bonds, thereby polymerizing the amino acids delivered by tRNAs into a polypeptide chain. The nascent polypeptides leave the ribosome through a tunnel in the LSU and interact with protein factors that function in enzymatic processing, targeting, and the membrane insertion of nascent chains at the exit of the ribosomal tunnel. The polypeptide is Large ribosomal subunit protein uL14 (Candida albicans (strain SC5314 / ATCC MYA-2876) (Yeast)).